Consider the following 149-residue polypeptide: D-aminoacyl-tRNA deacylase (149 aa).

The Gly-cisPro motif, important for rejection of L-amino acids motif lies at 137-138; that stretch reads GP.

This sequence belongs to the DTD family. Homodimer.

The protein resides in the cytoplasm. It catalyses the reaction glycyl-tRNA(Ala) + H2O = tRNA(Ala) + glycine + H(+). The catalysed reaction is a D-aminoacyl-tRNA + H2O = a tRNA + a D-alpha-amino acid + H(+). Functionally, an aminoacyl-tRNA editing enzyme that deacylates mischarged D-aminoacyl-tRNAs. Also deacylates mischarged glycyl-tRNA(Ala), protecting cells against glycine mischarging by AlaRS. Acts via tRNA-based rather than protein-based catalysis; rejects L-amino acids rather than detecting D-amino acids in the active site. By recycling D-aminoacyl-tRNA to D-amino acids and free tRNA molecules, this enzyme counteracts the toxicity associated with the formation of D-aminoacyl-tRNA entities in vivo and helps enforce protein L-homochirality. This chain is D-aminoacyl-tRNA deacylase, found in Desulfitobacterium hafniense (strain DSM 10664 / DCB-2).